Here is a 307-residue protein sequence, read N- to C-terminus: NAD kinase 2 (307 aa).

The active-site Proton acceptor is Asp-77. Residues 77–78 (DG), 151–152 (NE), Asp-181, 192–197 (TAYALS), and Asn-251 each bind NAD(+).

This sequence belongs to the NAD kinase family. A divalent metal cation is required as a cofactor.

The protein resides in the cytoplasm. It catalyses the reaction NAD(+) + ATP = ADP + NADP(+) + H(+). Functionally, involved in the regulation of the intracellular balance of NAD and NADP, and is a key enzyme in the biosynthesis of NADP. Catalyzes specifically the phosphorylation on 2'-hydroxyl of the adenosine moiety of NAD to yield NADP. This is NAD kinase 2 from Thermosynechococcus vestitus (strain NIES-2133 / IAM M-273 / BP-1).